The sequence spans 924 residues: Type II inositol 3,4-bisphosphate 4-phosphatase (924 aa).

The segment covering 1–13 (MEIKEEGASEEGQ) has biased composition (basic and acidic residues). Disordered stretches follow at residues 1-25 (MEIK…SDPG), 481-516 (ILKK…HSDY), and 546-569 (DGGS…DAIP). Residues 23-165 (DPGDCQFTSI…LKSKEQLLVL (143 aa)) enclose the C2 domain.

It belongs to the inositol 3,4-bisphosphate 4-phosphatase family.

It carries out the reaction a 1,2-diacyl-sn-glycero-3-phospho-(1D-myo-inositol-3,4-bisphosphate) + H2O = a 1,2-diacyl-sn-glycero-3-phospho-(1D-myo-inositol-3-phosphate) + phosphate. The catalysed reaction is 1D-myo-inositol 1,3,4-trisphosphate + H2O = 1D-myo-inositol 1,3-bisphosphate + phosphate. The enzyme catalyses 1D-myo-inositol 3,4-bisphosphate + H2O = 1D-myo-inositol 3-phosphate + phosphate. It functions in the pathway signal transduction; phosphatidylinositol signaling pathway. With respect to regulation, strongly inhibited by inositol hexakisphosphate. Its function is as follows. Catalyzes the hydrolysis of the 4-position phosphate of phosphatidylinositol 3,4-bisphosphate, inositol 1,3,4-trisphosphate and inositol 3,4-bisphosphate. Plays a role in the late stages of macropinocytosis by dephosphorylating phosphatidylinositol 3,4-bisphosphate in membrane ruffles. Antagonizes the PI3K-AKT/PKB signaling pathway by dephosphorylating phosphoinositides and thereby modulating cell cycle progression and cell survival. The sequence is that of Type II inositol 3,4-bisphosphate 4-phosphatase (INPP4B) from Pongo abelii (Sumatran orangutan).